We begin with the raw amino-acid sequence, 567 residues long: Dihydrolipoyllysine-residue acetyltransferase component of pyruvate dehydrogenase complex (567 aa).

Lipoyl-binding domains follow at residues 2–75 and 108–181; these read SKQI…LVLE and IVEV…MRFE. K41 and K147 each carry N6-lipoyllysine. Positions 192 to 238 are enriched in low complexity; that stretch reads SAPASTSAPQTAAPATTAQAPQAAAPDTTAQAPQAAAPDTTAQAAQS. Residues 192–249 form a disordered region; that stretch reads SAPASTSAPQTAAPATTAQAPQAAAPDTTAQAPQAAAPDTTAQAAQSNNNVSGLSQEQ. Over residues 239–249 the composition is skewed to polar residues; sequence NNNVSGLSQEQ. The region spanning 258-295 is the Peripheral subunit-binding (PSBD) domain; that stretch reads HATPVIRRLAREFGVNLDKVKGTGRKGRIVKEDIEAYV. Catalysis depends on residues C484, H540, and D544.

It belongs to the 2-oxoacid dehydrogenase family. Forms a 24-polypeptide structural core with octahedral symmetry. The cofactor is (R)-lipoate.

The catalysed reaction is N(6)-[(R)-dihydrolipoyl]-L-lysyl-[protein] + acetyl-CoA = N(6)-[(R)-S(8)-acetyldihydrolipoyl]-L-lysyl-[protein] + CoA. The pyruvate dehydrogenase complex catalyzes the overall conversion of pyruvate to acetyl-CoA and CO(2). It contains multiple copies of three enzymatic components: pyruvate dehydrogenase (E1), dihydrolipoamide acetyltransferase (E2) and lipoamide dehydrogenase (E3). The protein is Dihydrolipoyllysine-residue acetyltransferase component of pyruvate dehydrogenase complex (aceF) of Haemophilus influenzae (strain ATCC 51907 / DSM 11121 / KW20 / Rd).